Consider the following 357-residue polypeptide: 3-isopropylmalate dehydrogenase (357 aa).

76–89 (GPQWDTIDPSLRPE) is a binding site for NAD(+). The substrate site is built by R96, R106, R134, and D224. The Mg(2+) site is built by D224, D248, and D252. 282–294 (GSAPDIAGKGIAN) is a binding site for NAD(+).

Belongs to the isocitrate and isopropylmalate dehydrogenases family. LeuB type 1 subfamily. In terms of assembly, homodimer. Mg(2+) is required as a cofactor. Mn(2+) serves as cofactor.

It localises to the cytoplasm. It carries out the reaction (2R,3S)-3-isopropylmalate + NAD(+) = 4-methyl-2-oxopentanoate + CO2 + NADH. Its pathway is amino-acid biosynthesis; L-leucine biosynthesis; L-leucine from 3-methyl-2-oxobutanoate: step 3/4. Catalyzes the oxidation of 3-carboxy-2-hydroxy-4-methylpentanoate (3-isopropylmalate) to 3-carboxy-4-methyl-2-oxopentanoate. The product decarboxylates to 4-methyl-2 oxopentanoate. The protein is 3-isopropylmalate dehydrogenase of Xanthomonas euvesicatoria pv. vesicatoria (strain 85-10) (Xanthomonas campestris pv. vesicatoria).